A 193-amino-acid polypeptide reads, in one-letter code: CASP-like protein 1F3 (193 aa).

The disordered stretch occupies residues 1-25 (MASPQNTSQKRFFQANSPGGMPTAS). Residues 1 to 35 (MASPQNTSQKRFFQANSPGGMPTASQSQRSRILAQ) are Cytoplasmic-facing. The helical transmembrane segment at 36–56 (ITLRFLAIAFTVTAIPVMITA) threads the bilayer. Residues 57–78 (KEPVSLLGLAITPSYKQSSAMK) are Extracellular-facing. Residues 79 to 99 (FLLGVNATVFAFTALSMLFVW) form a helical membrane-spanning segment. Residues 100–118 (PLRRSGSKPINYFFLHLHD) lie on the Cytoplasmic side of the membrane. A helical transmembrane segment spans residues 119–139 (MVMTLLLISGCAAATAVGYLS). At 140 to 161 (QYGQPETYWSPICDIVKKFCHQ) the chain is on the extracellular side. A helical transmembrane segment spans residues 162 to 182 (MLISTVLSYLAFFCYLALNIL). Residues 183–193 (SVHKLMSRATE) are Cytoplasmic-facing.

The protein belongs to the Casparian strip membrane proteins (CASP) family. As to quaternary structure, homodimer and heterodimers.

It is found in the cell membrane. The polypeptide is CASP-like protein 1F3 (Populus trichocarpa (Western balsam poplar)).